The sequence spans 90 residues: Small ribosomal subunit protein uS15c (90 aa).

As to quaternary structure, component of the chloroplast small ribosomal subunit (SSU). Mature 70S chloroplast ribosomes of higher plants consist of a small (30S) and a large (50S) subunit. The 30S small subunit contains 1 molecule of ribosomal RNA (16S rRNA) and 24 different proteins. The 50S large subunit contains 3 rRNA molecules (23S, 5S and 4.5S rRNA) and 33 different proteins.

It is found in the plastid. The protein resides in the chloroplast. In terms of biological role, component of the chloroplast ribosome (chloro-ribosome), a dedicated translation machinery responsible for the synthesis of chloroplast genome-encoded proteins, including proteins of the transcription and translation machinery and components of the photosynthetic apparatus. The chain is Small ribosomal subunit protein uS15c (rps15) from Spinacia oleracea (Spinach).